A 142-amino-acid polypeptide reads, in one-letter code: Gonadotropin subunit beta-2 (142 aa).

The first 23 residues, 1 to 23 (MLGLHVGTLISLFLCILLEPIEG), serve as a signal peptide directing secretion. 6 disulfides stabilise this stretch: C29–C77, C43–C92, C46–C130, C54–C108, C58–C110, and C113–C120. An N-linked (GlcNAc...) asparagine glycan is attached at N33.

The protein belongs to the glycoprotein hormones subunit beta family. As to quaternary structure, heterodimer of an alpha and a beta chain.

It is found in the secreted. Its function is as follows. Involved in gametogenesis and steroidogenesis. The polypeptide is Gonadotropin subunit beta-2 (cgbb) (Oncorhynchus tshawytscha (Chinook salmon)).